A 137-amino-acid chain; its full sequence is Ribosome-binding factor A (137 aa).

It belongs to the RbfA family. Monomer. Binds 30S ribosomal subunits, but not 50S ribosomal subunits or 70S ribosomes.

It is found in the cytoplasm. In terms of biological role, one of several proteins that assist in the late maturation steps of the functional core of the 30S ribosomal subunit. Associates with free 30S ribosomal subunits (but not with 30S subunits that are part of 70S ribosomes or polysomes). Required for efficient processing of 16S rRNA. May interact with the 5'-terminal helix region of 16S rRNA. This chain is Ribosome-binding factor A, found in Rhodopseudomonas palustris (strain BisB18).